A 217-amino-acid polypeptide reads, in one-letter code: 3-demethoxyubiquinol 3-hydroxylase (217 aa).

E66, E96, H99, E148, E180, and H183 together coordinate Fe cation.

The protein belongs to the COQ7 family. Requires Fe cation as cofactor.

It localises to the cell membrane. The catalysed reaction is a 5-methoxy-2-methyl-3-(all-trans-polyprenyl)benzene-1,4-diol + AH2 + O2 = a 3-demethylubiquinol + A + H2O. Its pathway is cofactor biosynthesis; ubiquinone biosynthesis. In terms of biological role, catalyzes the hydroxylation of 2-nonaprenyl-3-methyl-6-methoxy-1,4-benzoquinol during ubiquinone biosynthesis. In Xylella fastidiosa (strain Temecula1 / ATCC 700964), this protein is 3-demethoxyubiquinol 3-hydroxylase.